The primary structure comprises 136 residues: MARTKQTARKSTSIKAPRKQLAAKAARKSAPISGGIKKPHKFRPGTVALREIRKYQKTTDLLIRKLPFQRLVRDIAMEMKSDIRFQSQAILALQEAAEAYLVGLFEDTNLCAIHARRVTIMTKDLHLARRIRGERF.

The disordered stretch occupies residues 1–41 (MARTKQTARKSTSIKAPRKQLAAKAARKSAPISGGIKKPHK).

Belongs to the histone H3 family. As to quaternary structure, the nucleosome is a histone octamer containing two molecules each of H2A, H2B, H3 and H4 assembled in one H3-H4 heterotetramer and two H2A-H2B heterodimers. The octamer wraps approximately 147 bp of DNA.

It is found in the nucleus. The protein resides in the chromosome. Macronuclear replacement variant which replaces conventional H3 in a subset of nucleosomes. Nucleosomes wrap and compact DNA into chromatin, limiting DNA accessibility to the cellular machineries which require DNA as a template. Histones thereby play a central role in transcription regulation, DNA repair, DNA replication and chromosomal stability. DNA accessibility is regulated via a complex set of post-translational modifications of histones, also called histone code, and nucleosome remodeling. Functions redundantly to H3.3. H3.4 deposition is mainly transcription-associated, DNA replication-independent. Although not essential for vegetative growth, minor H3 variants are required for producing viable conjugation progeny by affecting late developmental stages of conjugation. This is Histone H3.4 (HHT4) from Tetrahymena thermophila (strain SB210).